Reading from the N-terminus, the 419-residue chain is Ribosome biogenesis protein NOP53 (419 aa).

Disordered regions lie at residues 1-21 (MGIK…KNKR) and 233-283 (KAFE…KIRQ). Residues 233–261 (KAFEDKGLVSDQDVNHSIDSDDQSEHEQA) are compositionally biased toward basic and acidic residues. Phosphoserine occurs at positions 242, 249, 252, and 256. Basic residues predominate over residues 269-283 (KNKRKTRSQRNKIRQ).

This sequence belongs to the NOP53 family.

It is found in the nucleus. The protein localises to the nucleolus. The protein resides in the nucleoplasm. Its function is as follows. May play a role in ribosome biogenesis. This is Ribosome biogenesis protein NOP53 from Schizosaccharomyces pombe (strain 972 / ATCC 24843) (Fission yeast).